The following is a 379-amino-acid chain: Arginine biosynthesis bifunctional protein ArgJ (379 aa).

Threonine 140, lysine 160, threonine 171, glutamate 249, asparagine 374, and threonine 379 together coordinate substrate. The active-site Nucleophile is the threonine 171.

It belongs to the ArgJ family. In terms of assembly, heterotetramer of two alpha and two beta chains.

It localises to the cytoplasm. The catalysed reaction is N(2)-acetyl-L-ornithine + L-glutamate = N-acetyl-L-glutamate + L-ornithine. The enzyme catalyses L-glutamate + acetyl-CoA = N-acetyl-L-glutamate + CoA + H(+). It participates in amino-acid biosynthesis; L-arginine biosynthesis; L-ornithine and N-acetyl-L-glutamate from L-glutamate and N(2)-acetyl-L-ornithine (cyclic): step 1/1. Its pathway is amino-acid biosynthesis; L-arginine biosynthesis; N(2)-acetyl-L-ornithine from L-glutamate: step 1/4. Catalyzes two activities which are involved in the cyclic version of arginine biosynthesis: the synthesis of N-acetylglutamate from glutamate and acetyl-CoA as the acetyl donor, and of ornithine by transacetylation between N(2)-acetylornithine and glutamate. The sequence is that of Arginine biosynthesis bifunctional protein ArgJ from Archaeoglobus fulgidus (strain ATCC 49558 / DSM 4304 / JCM 9628 / NBRC 100126 / VC-16).